Here is a 266-residue protein sequence, read N- to C-terminus: NADH dehydrogenase [ubiquinone] iron-sulfur protein 3, mitochondrial (266 aa).

The transit peptide at 1–38 directs the protein to the mitochondrion; sequence MAAAVAAAARGCWQRLVGSAAPARVAGRPSVLLLPVRR.

The protein belongs to the complex I 30 kDa subunit family. As to quaternary structure, core subunit of respiratory chain NADH dehydrogenase (Complex I) which is composed of 45 different subunits. Interacts with NDUFAF3. Interacts with RAB5IF. Found in subcomplexes containing subunits NDUFS2, MT-ND1 and NDUFA13.

It localises to the mitochondrion inner membrane. It carries out the reaction a ubiquinone + NADH + 5 H(+)(in) = a ubiquinol + NAD(+) + 4 H(+)(out). Functionally, core subunit of the mitochondrial membrane respiratory chain NADH dehydrogenase (Complex I) which catalyzes electron transfer from NADH through the respiratory chain, using ubiquinone as an electron acceptor. Essential for the catalytic activity and assembly of complex I. This chain is NADH dehydrogenase [ubiquinone] iron-sulfur protein 3, mitochondrial (NDUFS3), found in Bos taurus (Bovine).